Consider the following 425-residue polypeptide: Dual-specificity RNA methyltransferase RlmN (425 aa).

The active-site Proton acceptor is the glutamate 136. One can recognise a Radical SAM core domain in the interval 142–381 (GDDRGTLCVS…FTAGYASPVR (240 aa)). Cysteines 149 and 392 form a disulfide. [4Fe-4S] cluster contacts are provided by cysteine 156, cysteine 160, and cysteine 163. S-adenosyl-L-methionine-binding positions include 218–219 (GE), serine 250, 272–274 (SLH), and asparagine 349. The active-site S-methylcysteine intermediate is the cysteine 392.

Belongs to the radical SAM superfamily. RlmN family. [4Fe-4S] cluster is required as a cofactor.

Its subcellular location is the cytoplasm. It catalyses the reaction adenosine(2503) in 23S rRNA + 2 reduced [2Fe-2S]-[ferredoxin] + 2 S-adenosyl-L-methionine = 2-methyladenosine(2503) in 23S rRNA + 5'-deoxyadenosine + L-methionine + 2 oxidized [2Fe-2S]-[ferredoxin] + S-adenosyl-L-homocysteine. The enzyme catalyses adenosine(37) in tRNA + 2 reduced [2Fe-2S]-[ferredoxin] + 2 S-adenosyl-L-methionine = 2-methyladenosine(37) in tRNA + 5'-deoxyadenosine + L-methionine + 2 oxidized [2Fe-2S]-[ferredoxin] + S-adenosyl-L-homocysteine. In terms of biological role, specifically methylates position 2 of adenine 2503 in 23S rRNA and position 2 of adenine 37 in tRNAs. m2A2503 modification seems to play a crucial role in the proofreading step occurring at the peptidyl transferase center and thus would serve to optimize ribosomal fidelity. The chain is Dual-specificity RNA methyltransferase RlmN from Methylorubrum extorquens (strain PA1) (Methylobacterium extorquens).